The sequence spans 294 residues: Elongation factor Ts (294 aa).

Residues 80–83 (TDFV) are involved in Mg(2+) ion dislocation from EF-Tu.

It belongs to the EF-Ts family.

The protein resides in the cytoplasm. In terms of biological role, associates with the EF-Tu.GDP complex and induces the exchange of GDP to GTP. It remains bound to the aminoacyl-tRNA.EF-Tu.GTP complex up to the GTP hydrolysis stage on the ribosome. This is Elongation factor Ts from Listeria monocytogenes serotype 4b (strain CLIP80459).